The chain runs to 147 residues: Protein phosphatase 1 regulatory subunit 14B (147 aa).

The segment covering 1–15 (MADSGPAGGAALAAP) has biased composition (low complexity). The tract at residues 1 to 55 (MADSGPAGGAALAAPAPGPGSGGAGPRVYFQSPPGAAGEGPGGADDEGPVRRQGK) is disordered. An N-acetylalanine modification is found at Ala-2. Position 21 is a phosphoserine (Ser-21). The residue at position 29 (Tyr-29) is a Phosphotyrosine. A Phosphoserine modification is found at Ser-32. Thr-57 carries the post-translational modification Phosphothreonine. The stretch at 61–103 (DRKELRKRLNLEEWILEQLTRLYDCQEEEIPELEIDVDELLDM) forms a coiled coil.

This sequence belongs to the PP1 inhibitor family. Phosphorylated primarily on Thr-57 by PKC (in vitro). An unknown Ser is also phosphorylated by PKC (in vitro).

It is found in the cytoplasm. Functionally, inhibitor of PPP1CA. Has over 50-fold higher inhibitory activity when phosphorylated. The sequence is that of Protein phosphatase 1 regulatory subunit 14B (PPP1R14B) from Sus scrofa (Pig).